The sequence spans 416 residues: MFSFFRRKKKQETPALEEAQVQETAAKVESEVAQIVGNIKEDVESLAESVKGRAESAVETVSGAVEQVKETVAEMPSEAGEAAERVESAKEAVAETVGEAVGQVQEAVATTEEHKLGWAARLKQGLAKSRDKMAKSLAGVFGGGQIGEDLYEELETVLITGDMGMEATEYLMKDVRGRVSLKGLKDGNELRGALKEALYDLIKPLEKPLVLPETKEPFVIMLAGINGAGKTTSIGKLAKYFQAQGKSVLLAAGDTFRAAAREQLQAWGGRNNVTVISQTTGDSAAVCFDAVQAAKARIDIVLADTAGRLPTQLHLMEEIKKVKRVLQKAIPGAPHEIIVVLDANIGQNAVNQVKAFDDALGLTGLIVTKLDGTAKGGILAALASDRPVPVRYIGVGEGIDDLRPFDARAFVDRLLD.

Over residues 1 to 10 the composition is skewed to basic residues; the sequence is MFSFFRRKKK. The disordered stretch occupies residues 1–24; it reads MFSFFRRKKKQETPALEEAQVQET. GTP contacts are provided by residues 224-231, 304-308, and 368-371; these read GINGAGKT, DTAGR, and TKLD.

It belongs to the GTP-binding SRP family. FtsY subfamily. As to quaternary structure, part of the signal recognition particle protein translocation system, which is composed of SRP and FtsY. SRP is a ribonucleoprotein composed of Ffh and a 4.5S RNA molecule. Mg(2+) serves as cofactor.

The protein localises to the cell membrane. The protein resides in the cytoplasm. It catalyses the reaction GTP + H2O = GDP + phosphate + H(+). Involved in targeting and insertion of nascent membrane proteins into the cytoplasmic membrane. Acts as a receptor for the complex formed by the signal recognition particle (SRP) and the ribosome-nascent chain (RNC). Interaction with SRP-RNC leads to the transfer of the RNC complex to the Sec translocase for insertion into the membrane, the hydrolysis of GTP by both Ffh and FtsY, and the dissociation of the SRP-FtsY complex into the individual components. The polypeptide is Signal recognition particle receptor FtsY (Neisseria gonorrhoeae).